Reading from the N-terminus, the 150-residue chain is uncharacterized protein (150 aa).

The protein localises to the plastid. It localises to the chloroplast. This is an uncharacterized protein from Pyropia yezoensis (Susabi-nori).